The chain runs to 695 residues: Calcium-binding acidic-repeat protein (695 aa).

The or 23 signal peptide spans 1 to 20 (MSHLWCWLFLVLCLACLVLS). 6 TSP type-3 repeats span residues 24–38 (KDSDGDGLLDVDEIN), 47–56 (ADSDQDGLTD), 70–82 (KDTDDDSIGDGVE), 184–196 (GDSDDDGVSDGAE), 202–214 (KDSDGDGLTDEEE), and 248–260 (GDSDDDGLGDGAE). The tract at residues 45-695 (YNADSDQDGL…TDPWRSDHSV (651 aa)) is disordered. Residues 59 to 70 (EVNRHQTHPQDK) are compositionally biased toward basic and acidic residues. Acidic residues-rich tracts occupy residues 271-283 (ADSDNDGLDDGEE), 291-306 (PEDPDSDNDGLNDGDE), and 313-324 (DPEEDDSDEDGV). TSP type-3 repeat units follow at residues 294–308 (PDSDNDGLNDGDEVN), 317–329 (DDSDEDGVCDGAE), 340–352 (EDSDNDGIPDGAE), 363–375 (EDSDDDGIADGAE), 379–393 (TDSDGDGLPDEDEVA), 402–414 (ADSDYDGLTDGAE), 425–437 (KDTDDDGLGDGVE), 470–482 (EDTDDDGLTDGAE), 493–505 (ADTDDDGLTDGAE), 516–528 (ADSDGDGLSDGAE), 539–551 (GDSDDDGVPDAAE), 555–569 (KDSDGDGLSDTDEVR), 600–609 (RDTDGDGVAD), 623–635 (ADTDDDGLTDGAE), and 646–658 (ADSDDDGLSDGAE). 2 stretches are compositionally biased toward acidic residues: residues 361–370 (NDEDSDDDGI) and 381–392 (SDGDGLPDEDEV). 2 stretches are compositionally biased toward acidic residues: residues 467–477 (PNDEDTDDDGL) and 491–500 (EDADTDDDGL). Positions 537–546 (NDGDSDDDGV) are enriched in acidic residues. The segment covering 589 to 603 (EILKHKTDPRNRDTD) has biased composition (basic and acidic residues). The span at 665–679 (NAKDGDSDDDGKADG) shows a compositional bias: basic and acidic residues.

The protein localises to the secreted. Its subcellular location is the endoplasmic reticulum. Its function is as follows. May function as a calcium-binding protein. The polypeptide is Calcium-binding acidic-repeat protein (Euglena gracilis).